A 261-amino-acid chain; its full sequence is uncharacterized protein (261 aa).

Positions 7, 9, 96, 132, 156, and 211 each coordinate a divalent metal cation.

It belongs to the metallo-dependent hydrolases superfamily. TatD-type hydrolase family. A divalent metal cation serves as cofactor.

This is an uncharacterized protein from Mycoplasma pneumoniae (strain ATCC 29342 / M129 / Subtype 1) (Mycoplasmoides pneumoniae).